The following is a 63-amino-acid chain: Large ribosomal subunit protein bL28 (63 aa).

It belongs to the bacterial ribosomal protein bL28 family.

This is Large ribosomal subunit protein bL28 from Beutenbergia cavernae (strain ATCC BAA-8 / DSM 12333 / CCUG 43141 / JCM 11478 / NBRC 16432 / NCIMB 13614 / HKI 0122).